The following is a 418-amino-acid chain: Histidine--tRNA ligase (418 aa).

Belongs to the class-II aminoacyl-tRNA synthetase family.

It localises to the cytoplasm. It carries out the reaction tRNA(His) + L-histidine + ATP = L-histidyl-tRNA(His) + AMP + diphosphate + H(+). The chain is Histidine--tRNA ligase from Methanococcus aeolicus (strain ATCC BAA-1280 / DSM 17508 / OCM 812 / Nankai-3).